The chain runs to 327 residues: Vacuolar protein sorting-associated protein 26A (327 aa).

The disordered stretch occupies residues 306–327 (RTNFHQRFESPESQASAEQPEM). A Phosphoserine modification is found at Ser-315. The span at 316–327 (PESQASAEQPEM) shows a compositional bias: polar residues.

It belongs to the VPS26 family. In terms of assembly, component of the heterotrimeric retromer cargo-selective complex (CSC), also described as vacuolar protein sorting subcomplex (VPS), formed by VPS26 (VPS26A or VPS26B), VPS29 and VPS35. The CSC has a highly elongated structure with VPS26 and VPS29 binding independently at opposite distal ends of VPS35 as central platform. The CSC is believed to associate with variable sorting nexins to form functionally distinct retromer complex variants. The originally described retromer complex (also called SNX-BAR retromer) is a pentamer containing the CSC and a heterodimeric membrane-deforming subcomplex formed between SNX1 or SNX2 and SNX5 or SNX6 (also called SNX-BAR subcomplex); the respective CSC and SNX-BAR subcomplexes associate with low affinity. The CSC associates with SNX3 to form a SNX3-retromer complex. The CSC associates with SNX27, the WASH complex and the SNX-BAR subcomplex to form the SNX27-retromer complex. Interacts with VPS29, VPS35, SNX1, SNX2, SNX5, SNX6, SNX3, SNX27, RAB7A, ECPAS, EHD1, WASHC5, SORL1.

It is found in the cytoplasm. Its subcellular location is the endosome membrane. It localises to the early endosome. Its function is as follows. Acts as a component of the retromer cargo-selective complex (CSC). The CSC is believed to be the core functional component of retromer or respective retromer complex variants acting to prevent missorting of selected transmembrane cargo proteins into the lysosomal degradation pathway. The recruitment of the CSC to the endosomal membrane involves RAB7A and SNX3. The SNX-BAR retromer mediates retrograde transport of cargo proteins from endosomes to the trans-Golgi network (TGN) and is involved in endosome-to-plasma membrane transport for cargo protein recycling. The SNX3-retromer mediates the retrograde endosome-to-TGN transport of WLS distinct from the SNX-BAR retromer pathway. The SNX27-retromer is believed to be involved in endosome-to-plasma membrane trafficking and recycling of a broad spectrum of cargo proteins. The CSC seems to act as recruitment hub for other proteins, such as the WASH complex and TBC1D5. Required for retrograde transport of lysosomal enzyme receptor IGF2R. Required to regulate transcytosis of the polymeric immunoglobulin receptor (pIgR-pIgA). Required for the endosomal localization of WASHC2A (indicative for the WASH complex). Required for the endosomal localization of TBC1D5. Mediates retromer cargo recognition of SORL1 and is involved in trafficking of SORL1 implicated in sorting and processing of APP. Involved in retromer-independent lysosomal sorting of F2R. Involved in recycling of ADRB2. Enhances the affinity of SNX27 for PDZ-binding motifs in cargo proteins. This is Vacuolar protein sorting-associated protein 26A from Homo sapiens (Human).